The sequence spans 446 residues: Oxysterols receptor LXR-beta (446 aa).

The span at 1–28 (MSSPTSSLDTPLPGNGSPQPSTSSTSPT) shows a compositional bias: low complexity. Positions 1 to 69 (MSSPTSSLDT…PERKRKKGPA (69 aa)) are disordered. Residues 1 to 76 (MSSPTSSLDT…GPAPKMLGHE (76 aa)) are transactivation AF-1; required for ligand-independent transactivation function. Residues 75 to 152 (HELCRVCGDK…AGMREQCVLS (78 aa)) constitute a DNA-binding region (nuclear receptor). NR C4-type zinc fingers lie at residues 78–98 (CRVCGDKASGFHYNVLSCEGC) and 116–140 (CRGSGTCQMDAFMRRKCQLCRLRKC). The interval 160 to 201 (KIQKQQQQQPPPPTEPASGSSARPAASPGTSEASSQGSGEGE) is disordered. Residues 175-196 (PASGSSARPAASPGTSEASSQG) show a composition bias toward low complexity. The interval 205–446 (LTAAQELMIQ…LLSEIWDVHE (242 aa)) is transactivation AF-2; required for ligand-dependent transactivation function; mediates interaction with CCAR2. In terms of domain architecture, NR LBD spans 208-446 (AQELMIQQLV…LLSEIWDVHE (239 aa)). Residues lysine 395 and lysine 433 each participate in a glycyl lysine isopeptide (Lys-Gly) (interchain with G-Cter in SUMO2) cross-link.

It belongs to the nuclear hormone receptor family. NR1 subfamily. As to quaternary structure, forms a heterodimer with RXR. Interacts with CCAR2 (via N-terminus) in a ligand-independent manner. Interacts (when sumoylated) with GPS2; interaction with GPS2 onto hepatic acute phase protein promoters prevents N-Cor corepressor complex dissociation. Interacts with ABCA12 and ABCA1; this interaction is required for ABCA1 localization to the cell surface and is necessary for its normal activity and stability. Post-translationally, sumoylated by SUMO2 at Lys-395 and Lys-433 during the hepatic acute phase response, leading to promote interaction with GPS2 and prevent N-Cor corepressor complex dissociation.

Its subcellular location is the nucleus. In terms of biological role, nuclear receptor that exhibits a ligand-dependent transcriptional activation activity. Binds preferentially to double-stranded oligonucleotide direct repeats having the consensus half-site sequence 5'-AGGTCA-3' and 4-nt spacing (DR-4). Regulates cholesterol uptake through MYLIP-dependent ubiquitination of LDLR, VLDLR and LRP8; DLDLR and LRP8. Interplays functionally with RORA for the regulation of genes involved in liver metabolism. Induces LPCAT3-dependent phospholipid remodeling in endoplasmic reticulum (ER) membranes of hepatocytes, driving SREBF1 processing and lipogenesis. Via LPCAT3, triggers the incorporation of arachidonate into phosphatidylcholines of ER membranes, increasing membrane dynamics and enabling triacylglycerols transfer to nascent very low-density lipoprotein (VLDL) particles. Via LPCAT3 also counteracts lipid-induced ER stress response and inflammation, likely by modulating SRC kinase membrane compartmentalization and limiting the synthesis of lipid inflammatory mediators. Plays an anti-inflammatory role during the hepatic acute phase response by acting as a corepressor: inhibits the hepatic acute phase response by preventing dissociation of the N-Cor corepressor complex. The polypeptide is Oxysterols receptor LXR-beta (Nr1h2) (Rattus norvegicus (Rat)).